Here is a 262-residue protein sequence, read N- to C-terminus: MRVLVSNDDGVDAPGIKILADALRNAGHEVMVVAPDRDRSGASNSLTLDTPIRAKQIDMHTYSVAGTPTDCVHLALTGLLNYDPDIVVSGINNTGNLGDDVIYSGTVSAAMEGRFLGLPAVAVSLVTLYREGQQAPQYETAAHAAINIVAQLKTDPLPADTILNVNVPDVTWQQMRGFKVTRLGNRHRSAPCLTQTDPRGHTIYWIGPAGPEQDAGPGTDFDAVRNTYISITPIHVDLTRYQALENVTRWTDRLTAHMDWPT.

The a divalent metal cation site is built by D8, D9, S40, and N92.

This sequence belongs to the SurE nucleotidase family. Requires a divalent metal cation as cofactor.

It is found in the cytoplasm. It catalyses the reaction a ribonucleoside 5'-phosphate + H2O = a ribonucleoside + phosphate. Its function is as follows. Nucleotidase that shows phosphatase activity on nucleoside 5'-monophosphates. This is 5'-nucleotidase SurE from Xylella fastidiosa (strain 9a5c).